The chain runs to 142 residues: 5a,11a-dehydrotetracycline/5a,11a-dehydrooxytetracycline reductase (142 aa).

The protein belongs to the pyridoxamine 5'-phosphate oxidase family.

It carries out the reaction tetracycline + oxidized coenzyme F420-(gamma-L-Glu)(n) + H(+) = 5a,11a-dehydrotetracycline + reduced coenzyme F420-(gamma-L-Glu)(n). The catalysed reaction is oxytetracycline + oxidized coenzyme F420-(gamma-L-Glu)(n) + H(+) = 5a,11a-dehydrooxytetracycline + reduced coenzyme F420-(gamma-L-Glu)(n). It functions in the pathway antibiotic biosynthesis; oxytetracycline biosynthesis. Its function is as follows. Involved in the biosynthesis of the antibiotics tetracycline and oxytetracycline. Catalyzes the C(5) reduction of 5a,11a-dehydrooxytetracycline to yield oxytetracycline as a major product. Also catalyzes the C(12) reduction of 5a,11a-dehydrotetracycline (12-dehydrotetracycline) to produce tetracycline as a minor product. The protein is 5a,11a-dehydrotetracycline/5a,11a-dehydrooxytetracycline reductase of Streptomyces rimosus subsp. rimosus (strain ATCC 10970 / DSM 40260 / JCM 4667 / NRRL 2234).